Reading from the N-terminus, the 480-residue chain is 3,6-anhydro-alpha-L-galactose dehydrogenase (480 aa).

Residues 149–150 (WN), 173–176 (KPTS), and 226–227 (GS) each bind NADP(+). The Proton acceptor role is filled by Glu248. Leu249 is an NADP(+) binding site. The Nucleophile role is filled by Cys282. Glu383 contributes to the NADP(+) binding site.

Belongs to the aldehyde dehydrogenase family.

The catalysed reaction is 3,6-anhydro-alpha-L-galactopyranose + NADP(+) + H2O = 3,6-anhydro-L-galactonate + NADPH + 2 H(+). It catalyses the reaction 3,6-anhydro-alpha-L-galactopyranose + NAD(+) + H2O = 3,6-anhydro-L-galactonate + NADH + 2 H(+). Its function is as follows. Involved in the degradation of 3,6-anhydro-L-galactose, which is the major monomeric sugar of red macroalgae. Catalyzes the oxidation of 3,6-anhydro-L-galactose (AHG) to form 3,6-anhydrogalactonate (AHGA). The chain is 3,6-anhydro-alpha-L-galactose dehydrogenase from Vibrio sp. (strain EJY3).